The following is a 462-amino-acid chain: Chitinase-like mite allergen Der p 18.0101 (462 aa).

The N-terminal stretch at 1–25 is a signal peptide; that stretch reads MTRLSFTVLIFLAAYFGSNIRPNVA. The region spanning 29–378 is the GH18 domain; it reads PKTVCYYESW…HAINSNYFRG (350 aa). An intrachain disulfide couples Cys-33 to Cys-58. Asn-338 and Asn-441 each carry an N-linked (GlcNAc...) asparagine glycan. The 59-residue stretch at 404 to 462 folds into the Chitin-binding type-2 domain; that stretch reads VFHCHQEGFFRDKTYCAKYYECKKGDFGLEQTVHHCPNHSQAFDEVSRTCVDHAKIPGC. Residues Cys-439 and Cys-453 are joined by a disulfide bond.

It belongs to the glycosyl hydrolase 18 family. Chitinase class II subfamily. In terms of tissue distribution, expressed in the peritrophic matrix of the midgut, and only very weakly in fecal pellets.

It is found in the secreted. Probably a non-catalytic chitinase-like protein, which binds to insoluble chitin and enhances the activity of the catalytic chitinases. Has weak chitin-binding activity. This is Chitinase-like mite allergen Der p 18.0101 from Dermatophagoides pteronyssinus (European house dust mite).